A 370-amino-acid chain; its full sequence is Peptidyl-prolyl cis-trans isomerase D (370 aa).

The 166-residue stretch at 11 to 176 (FFDISADGKP…EDWIISDCGE (166 aa)) folds into the PPIase cyclophilin-type domain. TPR repeat units lie at residues 218–251 (VTTLKDIGTKQLKDGNVAAAYEKYNKASGFLNDY), 269–302 (LSCYLNAALVALKLKDGKKTINAASNALEVEAID), and 307–340 (TKALYRKGMGYLLAKDEESAQKSLEEALQLSPED).

Belongs to the cyclophilin-type PPIase family. PPIase D subfamily.

It localises to the cytoplasm. The catalysed reaction is [protein]-peptidylproline (omega=180) = [protein]-peptidylproline (omega=0). In terms of biological role, PPIases accelerate the folding of proteins. It catalyzes the cis-trans isomerization of proline imidic peptide bonds in oligopeptides. The sequence is that of Peptidyl-prolyl cis-trans isomerase D (CPR6) from Debaryomyces hansenii (strain ATCC 36239 / CBS 767 / BCRC 21394 / JCM 1990 / NBRC 0083 / IGC 2968) (Yeast).